We begin with the raw amino-acid sequence, 355 residues long: 3-dehydroquinate synthase (355 aa).

Residues G98 to D102, T122 to T123, K135, K144, and T162 to T165 contribute to the NAD(+) site. E177, H240, and H257 together coordinate Zn(2+).

Belongs to the sugar phosphate cyclases superfamily. Dehydroquinate synthase family. The cofactor is Co(2+). Zn(2+) serves as cofactor. Requires NAD(+) as cofactor.

The protein resides in the cytoplasm. It carries out the reaction 7-phospho-2-dehydro-3-deoxy-D-arabino-heptonate = 3-dehydroquinate + phosphate. It functions in the pathway metabolic intermediate biosynthesis; chorismate biosynthesis; chorismate from D-erythrose 4-phosphate and phosphoenolpyruvate: step 2/7. In terms of biological role, catalyzes the conversion of 3-deoxy-D-arabino-heptulosonate 7-phosphate (DAHP) to dehydroquinate (DHQ). This Dictyoglomus thermophilum (strain ATCC 35947 / DSM 3960 / H-6-12) protein is 3-dehydroquinate synthase.